The following is a 155-amino-acid chain: Effector protein PevD1 (155 aa).

Positions 1-18 are cleaved as a signal peptide; the sequence is MQFTLAAAAALFGASALA. Residues 33-148 enclose the AA1-like domain; it reads NMYENIDIAD…NPTTIVIDSL (116 aa). Intrachain disulfides connect cysteine 70–cysteine 84 and cysteine 125–cysteine 135.

As to quaternary structure, monomer. Interacts with Arabidopsis thaliana NRP.

Its subcellular location is the secreted. In terms of biological role, effector protein. Elicits a hypersensitive response (HR) in tobacco plants (N.tabacum) and cotton (G.hirsutum). Boosts systemic acquired resistance (SAR) to tobacco mosaic virus (TMV) infection in N.tabacum and to V.dhaliae infection in primed cotton seedlings. This chain is Effector protein PevD1, found in Verticillium dahliae (Verticillium wilt).